We begin with the raw amino-acid sequence, 231 residues long: UPF0173 metal-dependent hydrolase AF_1265 (231 aa).

It belongs to the UPF0173 family.

The protein is UPF0173 metal-dependent hydrolase AF_1265 of Archaeoglobus fulgidus (strain ATCC 49558 / DSM 4304 / JCM 9628 / NBRC 100126 / VC-16).